The following is a 289-amino-acid chain: Urease accessory protein UreD (289 aa).

The protein belongs to the UreD family. UreD, UreF and UreG form a complex that acts as a GTP-hydrolysis-dependent molecular chaperone, activating the urease apoprotein by helping to assemble the nickel containing metallocenter of UreC. The UreE protein probably delivers the nickel.

It is found in the cytoplasm. Required for maturation of urease via the functional incorporation of the urease nickel metallocenter. In Magnetococcus marinus (strain ATCC BAA-1437 / JCM 17883 / MC-1), this protein is Urease accessory protein UreD.